The primary structure comprises 81 residues: Cytotoxin 1b (81 aa).

A signal peptide spans 1–21; the sequence is MKTLLLTLVVVTIVCLDLGYT. Intrachain disulfides connect Cys-24–Cys-42, Cys-35–Cys-59, Cys-63–Cys-74, and Cys-75–Cys-80.

Belongs to the three-finger toxin family. Short-chain subfamily. Type IA cytotoxin sub-subfamily. As to quaternary structure, monomer in solution; Homodimer and oligomer in the presence of negatively charged lipids forming a pore with a size ranging between 20 and 30 Angstroms. Expressed by the venom gland.

The protein localises to the secreted. It localises to the target cell membrane. Shows cytolytic activity on many different cells by forming pore in lipid membranes. In vivo, increases heart rate or kills the animal by cardiac arrest. In addition, it binds to heparin with high affinity, interacts with Kv channel-interacting protein 1 (KCNIP1) in a calcium-independent manner, and binds to integrin alpha-V/beta-3 (ITGAV/ITGB3) with moderate affinity. The sequence is that of Cytotoxin 1b from Naja atra (Chinese cobra).